Here is a 146-residue protein sequence, read N- to C-terminus: MYPAHLLVLLAVCVSLLGAASIPPQPLNLVQFSYLIQCANHGSRATWHYTDYGCYCGSGGSGTPVDELDRCCQTHDNCYGEAEKKGCYPKMSAYDYYCGGDGPYCRNIRKECQRFVCDCDAIAAKCFARAPYNDANWDIDTETRCQ.

The first 19 residues, 1-19 (MYPAHLLVLLAVCVSLLGA), serve as a signal peptide directing secretion. A propeptide spanning residues 20–27 (ASIPPQPL) is cleaved from the precursor. 7 disulfides stabilise this stretch: cysteine 38-cysteine 98, cysteine 54-cysteine 145, cysteine 56-cysteine 72, cysteine 71-cysteine 126, cysteine 78-cysteine 119, cysteine 87-cysteine 112, and cysteine 105-cysteine 117. The Ca(2+) site is built by tyrosine 55, glycine 57, and glycine 59. Histidine 75 is an active-site residue. Aspartate 76 is a Ca(2+) binding site. Aspartate 120 is a catalytic residue.

It belongs to the phospholipase A2 family. Group I subfamily. D49 sub-subfamily. It depends on Ca(2+) as a cofactor. As to expression, expressed by the venom gland.

Its subcellular location is the secreted. It carries out the reaction a 1,2-diacyl-sn-glycero-3-phosphocholine + H2O = a 1-acyl-sn-glycero-3-phosphocholine + a fatty acid + H(+). In terms of biological role, snake venom phospholipase A2 (PLA2) that inhibits collagen-induced platelet aggregation. PLA2 catalyzes the calcium-dependent hydrolysis of the 2-acyl groups in 3-sn-phosphoglycerides. In Austrelaps superbus (Lowland copperhead snake), this protein is Acidic phospholipase A2 S8-51.